A 773-amino-acid polypeptide reads, in one-letter code: Carnitine O-palmitoyltransferase 1, liver isoform (773 aa).

Position 2 is an N-acetylalanine (A2). Over 2–47 (AEAHQAVAFQFTVTPDGIDLRLSHEALRQIYLSGLHSWKKKFIRFK) the chain is Cytoplasmic. The helical transmembrane segment at 48 to 73 (NGIITGVYPASPSSWLIVVVGVMTTM) threads the bilayer. The Mitochondrial intermembrane portion of the chain corresponds to 74-102 (YAKIDPSLGIIAKINRTLETANCMSSQTK). The chain crosses the membrane as a helical span at residues 103 to 122 (NVVSGVLFGTGLWVALIVTM). Topologically, residues 123 to 773 (RYSLKVLLSY…LFGLSSNSKK (651 aa)) are cytoplasmic. 3'-nitrotyrosine is present on Y282. The Proton acceptor role is filled by H473. A CoA-binding site is contributed by 555–567 (GKGIIKKCRTSPD). T588 carries the phosphothreonine modification. Position 589 is a 3'-nitrotyrosine (Y589). Y589 and T602 together coordinate (R)-carnitine. T604 carries the post-translational modification Phosphothreonine. Phosphoserine occurs at positions 741 and 747.

This sequence belongs to the carnitine/choline acetyltransferase family. In terms of assembly, homohexamer and homotrimer. Identified in a complex that contains at least CPT1A, ACSL1 and VDAC1. Also identified in complexes with ACSL1 and VDAC2 and VDAC3. Interacts with ZDHHC4. Strong expression in kidney and heart, and lower in liver and skeletal muscle.

It localises to the mitochondrion outer membrane. It carries out the reaction (R)-carnitine + hexadecanoyl-CoA = O-hexadecanoyl-(R)-carnitine + CoA. The catalysed reaction is succinyl-CoA + L-lysyl-[protein] = N(6)-succinyl-L-lysyl-[protein] + CoA + H(+). The protein operates within lipid metabolism; fatty acid beta-oxidation. Inhibited by malonyl-CoA. Its function is as follows. Catalyzes the transfer of the acyl group of long-chain fatty acid-CoA conjugates onto carnitine, an essential step for the mitochondrial uptake of long-chain fatty acids and their subsequent beta-oxidation in the mitochondrion. Also possesses a lysine succinyltransferase activity that can regulate enzymatic activity of substrate proteins such as ENO1 and metabolism independent of its classical carnitine O-palmitoyltransferase activity. Plays an important role in hepatic triglyceride metabolism. Also plays a role in inducible regulatory T-cell (iTreg) differentiation once activated by butyryl-CoA that antagonizes malonyl-CoA-mediated CPT1A repression. Sustains the IFN-I response by recruiting ZDHCC4 to palmitoylate MAVS at the mitochondria leading to MAVS stabilization and activation. Promotes ROS-induced oxidative stress in liver injury via modulation of NFE2L2 and NLRP3-mediated signaling pathways. The chain is Carnitine O-palmitoyltransferase 1, liver isoform from Homo sapiens (Human).